Consider the following 1138-residue polypeptide: Phosphatidylserine decarboxylase proenzyme 2 (1138 aa).

The 122-residue stretch at 1–122 folds into the C2 1 domain; the sequence is MRIIKGRKRG…SNSGLSSHSH (122 aa). Disordered regions lie at residues 90 to 166, 269 to 305, and 413 to 448; these read TGAP…PGST, MRSS…DTDL, and AVSE…REDS. The span at 98–121 shows a compositional bias: low complexity; the sequence is SRPRTTTANTSSSTLSNSGLSSHS. Over residues 125–135 the composition is skewed to polar residues; that stretch reads RNLNVTSKGNQ. Residues 136–166 show a composition bias toward low complexity; it reads TSTSINSVSSSATPAPSHSSSSLSTTGPGST. A compositionally biased stretch (basic and acidic residues) spans 293-305; sequence EIRREKPYSDTDL. Residues 421–448 are compositionally biased toward acidic residues; the sequence is SVDDEESENQQESDEEFDIYNEDEREDS. The C2 2 domain occupies 478–600; sequence RRAKSNFFIS…QQQQHENEWI (123 aa). Aspartate 571, serine 574, and aspartate 577 together coordinate Ca(2+). Active-site charge relay system; for autoendoproteolytic cleavage activity residues include aspartate 899, histidine 956, and serine 1043. Serine 1043 serves as the catalytic Schiff-base intermediate with substrate; via pyruvic acid; for decarboxylase activity. Serine 1043 is modified (pyruvic acid (Ser); by autocatalysis).

This sequence belongs to the phosphatidylserine decarboxylase family. PSD-B subfamily. Eukaryotic type II sub-subfamily. In terms of assembly, heterodimer of a large membrane-associated beta subunit and a small pyruvoyl-containing alpha subunit. Interacts with pstB2/PDR17. This interaction may be a means to structurally tether the donor membrane (ER) harboring PstB2/PDR17 to acceptor membranes (Golgi/endosomes) harboring PSD2 during PtdSer transport to the site of PtdEtn synthesis. It depends on pyruvate as a cofactor. The cofactor is Ca(2+). Is synthesized initially as an inactive proenzyme. Formation of the active enzyme involves a self-maturation process in which the active site pyruvoyl group is generated from an internal serine residue via an autocatalytic post-translational modification. Two non-identical subunits are generated from the proenzyme in this reaction, and the pyruvate is formed at the N-terminus of the alpha chain, which is derived from the carboxyl end of the proenzyme. The autoendoproteolytic cleavage occurs by a canonical serine protease mechanism, in which the side chain hydroxyl group of the serine supplies its oxygen atom to form the C-terminus of the beta chain, while the remainder of the serine residue undergoes an oxidative deamination to produce ammonia and the pyruvoyl prosthetic group on the alpha chain. During this reaction, the Ser that is part of the protease active site of the proenzyme becomes the pyruvoyl prosthetic group, which constitutes an essential element of the active site of the mature decarboxylase.

Its subcellular location is the golgi apparatus membrane. The protein localises to the endosome membrane. It carries out the reaction a 1,2-diacyl-sn-glycero-3-phospho-L-serine + H(+) = a 1,2-diacyl-sn-glycero-3-phosphoethanolamine + CO2. It functions in the pathway phospholipid metabolism; phosphatidylethanolamine biosynthesis; phosphatidylethanolamine from CDP-diacylglycerol: step 2/2. Catalyzes the formation of phosphatidylethanolamine (PtdEtn) from phosphatidylserine (PtdSer). Plays a central role in phospholipid metabolism and in the interorganelle trafficking of phosphatidylserine. Phosphatidylethanolamine produced by PSD2 is insufficient to completely provide the PtdEtn pool required by mitochondria under respiratory conditions. PSD2 is also involved in the PtdSer transport step to the site of PtdEtn synthesis on the Golgi/endosome membranes. Required for normal heavy metal resistance. In Saccharomyces cerevisiae (strain ATCC 204508 / S288c) (Baker's yeast), this protein is Phosphatidylserine decarboxylase proenzyme 2.